The primary structure comprises 635 residues: MAEHELRVLEIPWVEKYRPKRLDDIVDQEHVVERLKAYVNRGDMPNLLFAGPPGTGKTTAALCLARELFGEHWRDNFLELNASVSADTPILVRRGGEVLRVTFEDLDSWYFGDRGGEYVDVSDLEVLTVDRNFRVTWARVSKLIRHRARKILRVHLEDGTIELTGNHAVMVLDEGGLRAVKASEIEEGSFLLSFVAELDEQPTDGGTVVTSVGSGSRVSDTTYELPVEVRVELLRELADDGVIEASEDVSVDLAWLARISGVESRVTDDGVELVWETRTGDLLPADPVLKLVERLESDLVDDLESWVFDGRVSKEAVRKVLSSVDAKNLRGDARRAYRMLRTLVRSDVHAVKVEDLDVMDYDGYVYDVSVPGNEMFFAGEVPVLLHNSDERGIDVIRTKVKNFARTRPMGGARFKIIFLDEADNLTRDSQQALRRIMEMYSDACRFILAANYSSAIIDPIQSRCVVFKFTKLPESAIKERLRKIAESEGVEITEDALDAIVYVSEGDMRRAINVLQAAAALGREIDEDTVFQIAATARPEEVREMIHHAWNGDFERARELLHELLTRYGMSGEDVVRQVHREIFDMDEIPEEAIPELVNAVGDFEYRLIRGSDERIQLEALLARIHALGNEYSGG.

51-58 (GPPGTGKT) contacts ATP.

It belongs to the activator 1 small subunits family. RfcS subfamily. Heteromultimer composed of small subunits (RfcS) and large subunits (RfcL). Post-translationally, this protein undergoes a protein self splicing that involves a post-translational excision of the intervening region (intein) followed by peptide ligation.

In terms of biological role, part of the RFC clamp loader complex which loads the PCNA sliding clamp onto DNA. This Methanopyrus kandleri (strain AV19 / DSM 6324 / JCM 9639 / NBRC 100938) protein is Replication factor C small subunit (rfcS).